The following is a 632-amino-acid chain: tRNA uridine 5-carboxymethylaminomethyl modification enzyme MnmG (632 aa).

Residues 15-20 (GAGHAG), Ile-127, and Ser-182 contribute to the FAD site. Position 276 to 290 (276 to 290 (GPRYCPSIEDKIVRF)) interacts with NAD(+). Residue Gln-373 coordinates FAD.

This sequence belongs to the MnmG family. In terms of assembly, homodimer. Heterotetramer of two MnmE and two MnmG subunits. FAD serves as cofactor.

The protein resides in the cytoplasm. In terms of biological role, NAD-binding protein involved in the addition of a carboxymethylaminomethyl (cmnm) group at the wobble position (U34) of certain tRNAs, forming tRNA-cmnm(5)s(2)U34. The protein is tRNA uridine 5-carboxymethylaminomethyl modification enzyme MnmG of Streptococcus pyogenes serotype M1.